A 347-amino-acid polypeptide reads, in one-letter code: Protein pelota homolog (347 aa).

It belongs to the eukaryotic release factor 1 family. Pelota subfamily. As to quaternary structure, monomer. A divalent metal cation serves as cofactor.

The protein resides in the cytoplasm. May function in recognizing stalled ribosomes, interact with stem-loop structures in stalled mRNA molecules, and effect endonucleolytic cleavage of the mRNA. May play a role in the release non-functional ribosomes and degradation of damaged mRNAs. Has endoribonuclease activity. The polypeptide is Protein pelota homolog (Methanothrix thermoacetophila (strain DSM 6194 / JCM 14653 / NBRC 101360 / PT) (Methanosaeta thermophila)).